A 1693-amino-acid polypeptide reads, in one-letter code: Latrophilin Cirl (1693 aa).

Residues 1–753 (MLPTILSISY…LFTMFDGNMR (753 aa)) lie on the Extracellular side of the membrane. Positions 25 to 114 (ACEGKKLTIE…KYLEAHYQCI (90 aa)) constitute an SUEL-type lectin domain. N-linked (GlcNAc...) asparagine glycosylation is present at N142. Polar residues-rich tracts occupy residues 185–198 (TAVT…STTA) and 256–265 (NVTSPSNTRI). Residues 185–299 (TAVTHSTPWS…PGTAASGSVA (115 aa)) are disordered. A glycan (N-linked (GlcNAc...) asparagine) is linked at N256. Residues 275-299 (DDGTLLTTKSSPNRPPGTAASGSVA) are compositionally biased toward low complexity. Residues N301, N340, N397, N641, N689, and N716 are each glycosylated (N-linked (GlcNAc...) asparagine). Positions 375–399 (YDEYDDDASSTTPAPSGGDCLHNSS) are disordered. The 177-residue stretch at 564-740 (KKSKIYSSVV…AILMDVVDEH (177 aa)) folds into the GAIN-B domain. 2 disulfide bridges follow: C695–C722 and C710–C724. The interval 695-740 (CVFWNYIDHAWSANGCSLESTNRTHSVCSCNHLTNFAILMDVVDEH) is GPS. The helical transmembrane segment at 754–774 (IFIYISIGICVVFIVIALLTL) threads the bilayer. Topologically, residues 775–787 (KLFNGVFVKSART) are cytoplasmic. Residues 788 to 808 (SIYTSIYLCLLAIELLFLLGI) traverse the membrane as a helical segment. The Extracellular portion of the chain corresponds to 809-814 (EQTETS). Residues 815 to 835 (IFCGFITIFLHCAILSGTAWF) form a helical membrane-spanning segment. Residues 836 to 861 (CYEAFHSYSTLTSDELLLEVDQTPKV) lie on the Cytoplasmic side of the membrane. A helical transmembrane segment spans residues 862–882 (NCYYLLSYGLSLSVVAISLVI). Over 883-906 (DPSTYTQNDYCVLMEANALFYATF) the chain is Extracellular. Residues 907 to 927 (VVPVLVFFVAAIGYTFLSWII) form a helical membrane-spanning segment. Over 928-954 (MCRKSRTGLKTKEHTRLASVRFDIRCS) the chain is Cytoplasmic. A helical membrane pass occupies residues 955 to 975 (FVFLLLLSAVWCSAYFYLRGA). Residues 976–985 (KMDDDTADVY) are Extracellular-facing. The helical transmembrane segment at 986–1006 (GYCFICFNTLLGLYIFVFHCI) threads the bilayer. At 1007–1693 (QNEKIRREYR…VRCYLEPLAK (687 aa)) the chain is on the cytoplasmic side. The residue at position 1142 (S1142) is a Phosphoserine. Disordered stretches follow at residues 1156 to 1194 (HKQQ…LKTP), 1220 to 1247 (KPNS…LHSR), 1294 to 1319 (QQQL…AEQH), 1433 to 1521 (GGGS…SDER), and 1601 to 1673 (LAVN…QQRH). S1239 and S1246 each carry phosphoserine. A compositionally biased stretch (low complexity) spans 1294–1309 (QQQLRRQQLHQQQQQL). A phosphoserine mark is found at S1310 and S1311. A compositionally biased stretch (low complexity) spans 1439–1464 (GGSVSSRSQQQQLKKQQQQQSLAQQR). Composition is skewed to acidic residues over residues 1472-1486 (DDDD…EEAT) and 1496-1507 (CDEDEEEDESDL). Residues 1508–1521 (EHDAHGLPPQSDER) are compositionally biased toward basic and acidic residues. Over residues 1630–1655 (LQKLSPQSTTSSSSHTSHSNPNLHPH) the composition is skewed to low complexity. The segment covering 1656–1672 (QLTHPHPHQHPPHHQQR) has biased composition (basic residues).

The protein belongs to the G-protein coupled receptor 2 family. LN-TM7 subfamily. Forms a heterodimer, consisting of a large extracellular region non-covalently linked to a seven-transmembrane moiety. Post-translationally, proteolytically cleaved into 2 subunits, an extracellular subunit and a seven-transmembrane subunit.

It localises to the cell membrane. This is Latrophilin Cirl from Drosophila sechellia (Fruit fly).